The sequence spans 709 residues: Protein SOSEKI 3 (709 aa).

The interval 8–101 (SSVQVLYQLS…YVLRASELFD (94 aa)) is DIX-like oligomerization domain. 5 disordered regions span residues 242–266 (LHTP…AKRM), 315–344 (RDGR…AEQS), 358–393 (GGSS…KTPC), 411–439 (PSPA…NRPS), and 506–560 (DSPT…DTKP). A compositionally biased stretch (basic and acidic residues) spans 329-342 (ELREVQNEKEKEAE). The segment covering 417–436 (NKAHSSLDRQEIPPQEECKN) has biased composition (basic and acidic residues). Over residues 529-544 (VKTSNSLPRVKTTTSP) the composition is skewed to polar residues. The segment at 663–692 (ILQECSTCGRTFKPDSLQVHMRGCHPPQYA) adopts a C2HC/C3H-type zinc-finger fold. The Zn(2+) site is built by cysteine 667, cysteine 670, histidine 682, and cysteine 686.

Belongs to the SOSEKI family. As to quaternary structure, homodimer. Forms long polymer filaments with other SOKs proteins polymers crucial for polar localization and biological activity. Zn(2+) is required as a cofactor.

The protein localises to the cell membrane. Its function is as follows. SOSEKI proteins locally interpret global polarity cues and can influence cell division orientation to coordinate cell polarization relative to body axes. In Physcomitrium patens (Spreading-leaved earth moss), this protein is Protein SOSEKI 3.